Here is a 146-residue protein sequence, read N- to C-terminus: Small ribosomal subunit protein uS15 (146 aa).

This sequence belongs to the universal ribosomal protein uS15 family. As to quaternary structure, part of the 30S ribosomal subunit.

This Picrophilus torridus (strain ATCC 700027 / DSM 9790 / JCM 10055 / NBRC 100828 / KAW 2/3) protein is Small ribosomal subunit protein uS15.